The sequence spans 57 residues: uncharacterized protein (57 aa).

The disordered stretch occupies residues 1 to 57 (MPHYVVVKSPMRRRRSPRRRSPRVCYSPRRVACSPRRRSPRRRSPRRRSPRRSIVVY). Over residues 10–22 (PMRRRRSPRRRSP) the composition is skewed to basic residues. Positions 23–34 (RVCYSPRRVACS) are enriched in low complexity. Basic residues predominate over residues 35–51 (PRRRSPRRRSPRRRSPR).

This is an uncharacterized protein from Acheta domesticus (House cricket).